Consider the following 146-residue polypeptide: Ribosome-binding factor A (146 aa).

A disordered region spans residues 125–146; that stretch reads RDLDADDDKTKDDRAKDDKDSE.

It belongs to the RbfA family. In terms of assembly, monomer. Binds 30S ribosomal subunits, but not 50S ribosomal subunits or 70S ribosomes.

The protein resides in the cytoplasm. In terms of biological role, one of several proteins that assist in the late maturation steps of the functional core of the 30S ribosomal subunit. Associates with free 30S ribosomal subunits (but not with 30S subunits that are part of 70S ribosomes or polysomes). Required for efficient processing of 16S rRNA. May interact with the 5'-terminal helix region of 16S rRNA. The polypeptide is Ribosome-binding factor A (Mesorhizobium japonicum (strain LMG 29417 / CECT 9101 / MAFF 303099) (Mesorhizobium loti (strain MAFF 303099))).